Reading from the N-terminus, the 356-residue chain is Zinc finger protein 830 (356 aa).

A coiled-coil region spans residues 11-33 (AQEELRKLMKAKQRESSSKKRIE). A C2H2-type zinc finger spans residues 47-69 (CVVCNSLIKSELLWPAHILGKQH). A disordered region spans residues 71–195 (EKVAELKGTK…PTSSADNLPA (125 aa)). The segment covering 80–90 (KATTSSPSNTI) has biased composition (polar residues). Basic and acidic residues-rich tracts occupy residues 99–118 (KGSEPEKQESKRTKGSEDHP) and 125–135 (LPEEFFEKEKT). The segment covering 150 to 165 (DYEDVDDDDAEEGEEY) has biased composition (acidic residues). The stretch at 278 to 322 (AEEDEEGRLDRQIDEIDEQIQCYRRVEHLRDRKDTLQDAKMEVLK) forms a coiled coil.

The protein resides in the nucleus. The protein localises to the chromosome. It localises to the nucleus speckle. In terms of biological role, may act as an important regulator of the cell cycle that participates in the maintenance of genome integrity. This Xenopus laevis (African clawed frog) protein is Zinc finger protein 830.